The primary structure comprises 475 residues: MKYEAVIGLEVHAELLTESKIFCGCTTKFGGEPNTHVCPVCLGLPGTLPVLNKKVVEYAVRAGLALNCTIANFSKMDRKNYFYPDLPKAYQISQYDLPLCSNGYVEIEVDGKVKKIGIKRIHIEEDAGKLLHENTDGSLVDYNRAGVPLIEIVSEPDMSTPEEAYQYLTKLKSILEYTEVSDCKMQEGSLRVDTNVSVRPVGSTELGTKIELKNLNSFRAVQKALEYEIKRQIKVLEEGGTIVQETRRWNEAKGITEPMRTKEEAHDYRYFPEPDLVPIIVTDEWKEEIRKSLPEMPHRKRERFISEYGLPEYDAKIITSSKKIADFFEKCALEYDSPKAVSNWLMGEFSRLMNETGKEIDEVPVTPQMLVKLLKLIDNGVISGSIAKTVFEEMFGTGKEPEVIVEEKGLKQIANEDELREIIKKVIAENPKSVEDYKNGKEKAMGFLVGQVMKATKGKANPQLTNQILKEELSK.

This sequence belongs to the GatB/GatE family. GatB subfamily. As to quaternary structure, heterotrimer of A, B and C subunits.

It carries out the reaction L-glutamyl-tRNA(Gln) + L-glutamine + ATP + H2O = L-glutaminyl-tRNA(Gln) + L-glutamate + ADP + phosphate + H(+). The enzyme catalyses L-aspartyl-tRNA(Asn) + L-glutamine + ATP + H2O = L-asparaginyl-tRNA(Asn) + L-glutamate + ADP + phosphate + 2 H(+). Functionally, allows the formation of correctly charged Asn-tRNA(Asn) or Gln-tRNA(Gln) through the transamidation of misacylated Asp-tRNA(Asn) or Glu-tRNA(Gln) in organisms which lack either or both of asparaginyl-tRNA or glutaminyl-tRNA synthetases. The reaction takes place in the presence of glutamine and ATP through an activated phospho-Asp-tRNA(Asn) or phospho-Glu-tRNA(Gln). The polypeptide is Aspartyl/glutamyl-tRNA(Asn/Gln) amidotransferase subunit B (Thermoanaerobacter sp. (strain X514)).